The following is a 236-amino-acid chain: Orotidine 5'-phosphate decarboxylase (236 aa).

Residues Asp-17, Lys-39, Asp-66–Thr-75, Thr-125, Arg-187, Gln-196, Gly-216, and Arg-217 each bind substrate. The Proton donor role is filled by Lys-68.

It belongs to the OMP decarboxylase family. Type 1 subfamily. As to quaternary structure, homodimer.

The enzyme catalyses orotidine 5'-phosphate + H(+) = UMP + CO2. It functions in the pathway pyrimidine metabolism; UMP biosynthesis via de novo pathway; UMP from orotate: step 2/2. Functionally, catalyzes the decarboxylation of orotidine 5'-monophosphate (OMP) to uridine 5'-monophosphate (UMP). The protein is Orotidine 5'-phosphate decarboxylase of Buchnera aphidicola subsp. Baizongia pistaciae (strain Bp).